A 1029-amino-acid polypeptide reads, in one-letter code: Protein translocase subunit SecA (1029 aa).

Residues Gln143, 161-165 (GEGKT), and Asp661 contribute to the ATP site. Residues 953 to 1029 (EQEQKKSQVQ…GKKYKNCCGK (77 aa)) form a disordered region. 2 stretches are compositionally biased toward basic and acidic residues: residues 966–975 (LVARHEKAET) and 984–996 (PEGR…ENGK). Residues Cys1015, Cys1017, Cys1026, and Cys1027 each coordinate Zn(2+).

The protein belongs to the SecA family. As to quaternary structure, monomer and homodimer. Part of the essential Sec protein translocation apparatus which comprises SecA, SecYEG and auxiliary proteins SecDF. Other proteins may also be involved. Zn(2+) serves as cofactor.

Its subcellular location is the cell inner membrane. The protein resides in the cytoplasm. The enzyme catalyses ATP + H2O + cellular proteinSide 1 = ADP + phosphate + cellular proteinSide 2.. Part of the Sec protein translocase complex. Interacts with the SecYEG preprotein conducting channel. Has a central role in coupling the hydrolysis of ATP to the transfer of proteins into and across the cell membrane, serving as an ATP-driven molecular motor driving the stepwise translocation of polypeptide chains across the membrane. The chain is Protein translocase subunit SecA from Chlorobium phaeobacteroides (strain BS1).